A 194-amino-acid polypeptide reads, in one-letter code: 3-isopropylmalate dehydratase small subunit (194 aa).

Belongs to the LeuD family. LeuD type 1 subfamily. As to quaternary structure, heterodimer of LeuC and LeuD.

The catalysed reaction is (2R,3S)-3-isopropylmalate = (2S)-2-isopropylmalate. Its pathway is amino-acid biosynthesis; L-leucine biosynthesis; L-leucine from 3-methyl-2-oxobutanoate: step 2/4. Catalyzes the isomerization between 2-isopropylmalate and 3-isopropylmalate, via the formation of 2-isopropylmaleate. This is 3-isopropylmalate dehydratase small subunit from Bacillus cereus (strain ATCC 14579 / DSM 31 / CCUG 7414 / JCM 2152 / NBRC 15305 / NCIMB 9373 / NCTC 2599 / NRRL B-3711).